We begin with the raw amino-acid sequence, 248 residues long: MLLCSLTLMLLWMVASGLECDTKEVCLGSPGIPGTPGSHGLPGRDGRDGIKGDPGPPGPMGPPGGMPGLPGRDGMTGAPGLPGERGEKGEPGERGPPGFPAYLDEELQGTLHEIRHQVLQSQGVLILQGSMLEVGEKVFSTNGQSLNFDAIKELCARAGGHIAAPRSPEENEAITSIVKKHNTYAYLGLAEGPTAGDFYYLDGAPVNYTNWYPGEPRGRGKEKCVEIYTDGQWNDKNCLQYRLAICEF.

The N-terminal stretch at 1 to 17 is a signal peptide; it reads MLLCSLTLMLLWMVASG. One can recognise a Collagen-like domain in the interval 28-100; that stretch reads GSPGIPGTPG…PGERGPPGFP (73 aa). Residues 29 to 103 are disordered; it reads SPGIPGTPGS…RGPPGFPAYL (75 aa). Residues 42–51 show a composition bias toward basic and acidic residues; that stretch reads PGRDGRDGIK. Over residues 54–65 the composition is skewed to pro residues; that stretch reads PGPPGPMGPPGG. Residues 69-82 are compositionally biased toward low complexity; sequence LPGRDGMTGAPGLP. Positions 84-93 are enriched in basic and acidic residues; sequence ERGEKGEPGE. The C-type lectin domain maps to 127 to 247; that stretch reads LQGSMLEVGE…CLQYRLAICE (121 aa). Intrachain disulfides connect C155–C246 and C224–C238. N207 carries N-linked (GlcNAc...) asparagine glycosylation. Residues E215, R217, N234, and D235 each coordinate Ca(2+).

Belongs to the SFTPA family. As to quaternary structure, oligomeric complex of 6 set of homotrimers.

It is found in the secreted. The protein resides in the extracellular space. Its subcellular location is the extracellular matrix. It localises to the surface film. In terms of biological role, in presence of calcium ions, it binds to surfactant phospholipids and contributes to lower the surface tension at the air-liquid interface in the alveoli of the mammalian lung and is essential for normal respiration. Enhances the expression of MYO18A/SP-R210 on alveolar macrophages. The chain is Pulmonary surfactant-associated protein A (SFTPA1) from Ovis aries (Sheep).